The sequence spans 239 residues: Uridylate kinase (239 aa).

10–13 (KLSG) is an ATP binding site. Gly-53 contributes to the UMP binding site. ATP is bound by residues Gly-54 and Arg-58. UMP-binding positions include Asp-73 and 135-142 (TGRPYFTT). Positions 163, 169, and 172 each coordinate ATP.

Belongs to the UMP kinase family. In terms of assembly, homohexamer.

Its subcellular location is the cytoplasm. It carries out the reaction UMP + ATP = UDP + ADP. It participates in pyrimidine metabolism; CTP biosynthesis via de novo pathway; UDP from UMP (UMPK route): step 1/1. Inhibited by UTP. Its function is as follows. Catalyzes the reversible phosphorylation of UMP to UDP. The sequence is that of Uridylate kinase from Mycoplasmopsis synoviae (strain 53) (Mycoplasma synoviae).